A 190-amino-acid chain; its full sequence is Potassium-transporting ATPase KdpC subunit (190 aa).

A helical membrane pass occupies residues 10–30 (TFIFLLLITGGVYPLLTTALG).

It belongs to the KdpC family. In terms of assembly, the system is composed of three essential subunits: KdpA, KdpB and KdpC.

The protein localises to the cell inner membrane. Functionally, part of the high-affinity ATP-driven potassium transport (or Kdp) system, which catalyzes the hydrolysis of ATP coupled with the electrogenic transport of potassium into the cytoplasm. This subunit acts as a catalytic chaperone that increases the ATP-binding affinity of the ATP-hydrolyzing subunit KdpB by the formation of a transient KdpB/KdpC/ATP ternary complex. The polypeptide is Potassium-transporting ATPase KdpC subunit (Escherichia coli O157:H7).